Consider the following 241-residue polypeptide: 7-cyano-7-deazaguanine synthase (241 aa).

15–25 (FSGGQDSTTTL) contacts ATP. The Zn(2+) site is built by C203, C218, C221, and C224.

This sequence belongs to the QueC family. It depends on Zn(2+) as a cofactor.

The enzyme catalyses 7-carboxy-7-deazaguanine + NH4(+) + ATP = 7-cyano-7-deazaguanine + ADP + phosphate + H2O + H(+). The protein operates within purine metabolism; 7-cyano-7-deazaguanine biosynthesis. In terms of biological role, catalyzes the ATP-dependent conversion of 7-carboxy-7-deazaguanine (CDG) to 7-cyano-7-deazaguanine (preQ(0)). This Azorhizobium caulinodans (strain ATCC 43989 / DSM 5975 / JCM 20966 / LMG 6465 / NBRC 14845 / NCIMB 13405 / ORS 571) protein is 7-cyano-7-deazaguanine synthase.